The primary structure comprises 147 residues: UPF0179 protein MTH_609 (147 aa).

Belongs to the UPF0179 family.

The sequence is that of UPF0179 protein MTH_609 from Methanothermobacter thermautotrophicus (strain ATCC 29096 / DSM 1053 / JCM 10044 / NBRC 100330 / Delta H) (Methanobacterium thermoautotrophicum).